The following is a 425-amino-acid chain: E3 ubiquitin-protein ligase TRIM31 (425 aa).

The RING-type zinc-finger motif lies at 16–57 (CPICLDILQKPVTIDCGHNFCLKCITQIGETSCGFFKCPLCK). The B box-type zinc finger occupies 90–131 (RKEATCPRHQEMFHYFCEDDGKFLCFVCRESKDHKSHNVSLI). Positions 95, 98, 117, and 123 each coordinate Zn(2+). Coiled coils occupy residues 126–162 (HNVS…VKAQ) and 270–307 (LELE…DENR). Residues 328-360 (HKMNKTSEPGSSSAGGRTTSGPPNHHSSAPSHS) form a disordered region. Residues 336-360 (PGSSSAGGRTTSGPPNHHSSAPSHS) are compositionally biased toward low complexity.

It belongs to the TRIM/RBCC family. In terms of assembly, may form oligomers. Interacts with isoform p52shc of SHC1. Post-translationally, auto-ubiquitinated (in vitro). In terms of tissue distribution, up-regulated in gastric adenocarcinomas.

The protein resides in the cytoplasm. Its subcellular location is the mitochondrion. It catalyses the reaction S-ubiquitinyl-[E2 ubiquitin-conjugating enzyme]-L-cysteine + [acceptor protein]-L-lysine = [E2 ubiquitin-conjugating enzyme]-L-cysteine + N(6)-ubiquitinyl-[acceptor protein]-L-lysine.. The protein operates within protein modification; protein ubiquitination. Its function is as follows. E3 ubiquitin-protein ligase that acts as a regulator of antiviral immune response and inflammation by mediating ubiquitination of substrates. Acts as a regulator of innate immune defense against viruses by mediating 'Lys-63'-linked ubiquitination of MAVS, promoting MAVS polymerization and formation of three-stranded helical filaments on mitochondria. Acts as a negative regulator of the NLRP3 inflammasome by catalyzing 'Lys-48'-linked ubiquitination of NLRP3, leading to its degradation. Regulator of Src-induced anchorage independent cell growth. The sequence is that of E3 ubiquitin-protein ligase TRIM31 from Homo sapiens (Human).